The following is a 306-amino-acid chain: Solute carrier family 25 member 48 (306 aa).

Solcar repeat units lie at residues 3–86 (SFQL…TQRF), 101–200 (RSLS…LSEW), and 209–296 (PSPY…SLKA). A run of 6 helical transmembrane segments spans residues 9–29 (FVAG…LDTV), 61–81 (GMSF…GVFS), 107–127 (LLAS…VELI), 184–204 (IPGY…ITPE), 212–232 (YAAW…ATPM), and 272–290 (ITVN…FLGY).

Belongs to the mitochondrial carrier (TC 2.A.29) family.

Its subcellular location is the mitochondrion inner membrane. In Mus musculus (Mouse), this protein is Solute carrier family 25 member 48 (Slc25a48).